A 492-amino-acid polypeptide reads, in one-letter code: MDKMRTLQSLIVKLTLLYGALCMLQTENVKEINKQECIQNAVYNFNTTDSKYLDPKCVTIFMDQYRGLKNLLNYTEDQMNYIFSLERAMMRKHHINDKRHKRQAMTRPRQECRTLTDDARNNLFNTIVDLKAPSNGMSRYDTIAGLHRQAIANAHMGANFLGWHRLYLDMFEMALQETRSDVVLCYWDSTLDFLMPGTSQVNTVSFSAELFGNGRGVVINGPFRFWRLPGGRTLQRFIARPGSSLTRPGVVDLIATDPRINTNSQIVFRGQGFPDPDTGRPGHSWEDEHNNTHVWVGGVMQNVVSSPQDPVFWFHHTYVDYVWELFRQKIGPGAREQYPADASGPHAPDAPMIGFDMLQNRDGYSDEHSRMYAMHPRCSNNCGNSRFLLCPNNGPMADPNRRCVSRAVNSDMVPAAAISAPEAAGFSAMSPMGAFGPAAVGPSSVGRMASRSGAARVSLQATDTVAIRAAMSEPPLQLEGPSFTSSFDDPRI.

The N-terminal stretch at 1 to 22 (MDKMRTLQSLIVKLTLLYGALC) is a signal peptide. Cu cation is bound by residues His-147, His-155, His-164, His-289, His-293, and His-316. Positions 472 to 492 (SEPPLQLEGPSFTSSFDDPRI) are disordered. Over residues 482 to 492 (SFTSSFDDPRI) the composition is skewed to polar residues.

Cu(2+) serves as cofactor. In terms of tissue distribution, prismatic layer of shell (at protein level). Expressed primarily in the mantle with highest level in the mantle edge and lower level in the mantle pallium.

The protein resides in the secreted. This is Tyrosinase-like protein 1 from Margaritifera margaritifera (Freshwater pearl mussel).